We begin with the raw amino-acid sequence, 424 residues long: Nicotinate phosphoribosyltransferase (424 aa).

Histidine 242 is modified (phosphohistidine; by autocatalysis).

Belongs to the NAPRTase family. In terms of processing, transiently phosphorylated on a His residue during the reaction cycle. Phosphorylation strongly increases the affinity for substrates and increases the rate of nicotinate D-ribonucleotide production. Dephosphorylation regenerates the low-affinity form of the enzyme, leading to product release.

It carries out the reaction nicotinate + 5-phospho-alpha-D-ribose 1-diphosphate + ATP + H2O = nicotinate beta-D-ribonucleotide + ADP + phosphate + diphosphate. Its pathway is cofactor biosynthesis; NAD(+) biosynthesis; nicotinate D-ribonucleotide from nicotinate: step 1/1. In terms of biological role, catalyzes the synthesis of beta-nicotinate D-ribonucleotide from nicotinate and 5-phospho-D-ribose 1-phosphate at the expense of ATP. This Bartonella bacilliformis (strain ATCC 35685 / KC583 / Herrer 020/F12,63) protein is Nicotinate phosphoribosyltransferase.